The chain runs to 330 residues: Calponin-3 (330 aa).

Lys-23 is modified (N6-acetyllysine). The Calponin-homology (CH) domain maps to 26–130 (QQAEEDLRNW…TLVALAGLAK (105 aa)). Lys-158 is subject to N6-methyllysine. Calponin-like repeat units lie at residues 164-189 (IGLQ…RHLY), 204-229 (ISLQ…RDIY), and 243-268 (ISLQ…RQVY). The tract at residues 279–330 (PVIHNGSQGTGTNGSEISDSDYQAEYPDEYHGEYPDEYPREYQYGDDQGIDY) is disordered. Over residues 306–318 (DEYHGEYPDEYPR) the composition is skewed to basic and acidic residues.

It belongs to the calponin family.

Its function is as follows. Thin filament-associated protein that is implicated in the regulation and modulation of smooth muscle contraction. It is capable of binding to actin, calmodulin and tropomyosin. The interaction of calponin with actin inhibits the actomyosin Mg-ATPase activity. In Rattus norvegicus (Rat), this protein is Calponin-3 (Cnn3).